The sequence spans 143 residues: Actin-depolymerizing factor 5 (143 aa).

The ADF-H domain occupies 11–143 (GMRVTDECTS…GFDIIQDRAK (133 aa)).

It belongs to the actin-binding proteins ADF family. Expressed exclusively in root tip meristem.

It localises to the cytoplasm. Its subcellular location is the cytoskeleton. Its function is as follows. Actin-depolymerizing protein. Severs actin filaments (F-actin) and binds to actin monomers. In Arabidopsis thaliana (Mouse-ear cress), this protein is Actin-depolymerizing factor 5 (ADF5).